The chain runs to 484 residues: Palmitoyltransferase ZDHHC1 (484 aa).

Composition is skewed to polar residues over residues 1–11 (MNICNKPSNKT) and 19–34 (TAPSQDSGPSPELQGQ). The disordered stretch occupies residues 1–38 (MNICNKPSNKTAPEKSVWTAPSQDSGPSPELQGQRSRR). Over 1-49 (MNICNKPSNKTAPEKSVWTAPSQDSGPSPELQGQRSRRNGWSWPPHPLQ) the chain is Cytoplasmic. The interval 1-268 (MNICNKPSNK…GHLLCFHIYL (268 aa)) is mediates interaction with STING1. A helical membrane pass occupies residues 50 to 70 (IVAWLLYLFFAVIGFGVLVPL). At 71 to 74 (LPHH) the chain is on the lumenal side. A helical transmembrane segment spans residues 75–95 (WVPAGYACMGAIFAGHLVVHL). Residues 96 to 182 (TAVSIDPADA…YRLFLHSVAS (87 aa)) lie on the Cytoplasmic side of the membrane. Positions 131–181 (LHCNLCDVDVSARSKHCSACNKCVCGFDHHCKWLNNCVGERNYRLFLHSVA) constitute a DHHC domain. The active-site S-palmitoyl cysteine intermediate is the cysteine 161. Residues 183-203 (ALLGVLLLVLVATYVFVEFFV) traverse the membrane as a helical segment. Residues 204-238 (NPMRLRTNQHFEVLKNHTDVWFVFLPAAPVETQAP) are Lumenal-facing. Residues 239–259 (AILALAALLILLGLLSTALLG) traverse the membrane as a helical segment. The Cytoplasmic segment spans residues 260–484 (HLLCFHIYLM…GTPGGGDGLP (225 aa)). Disordered regions lie at residues 341 to 415 (TQGQ…VHAG) and 444 to 484 (LGAP…DGLP). The span at 364-374 (PQKKRKRRVYR) shows a compositional bias: basic residues. Residues 380-392 (VLDRELPLPRLRE) show a composition bias toward basic and acidic residues. Residues 395 to 415 (TPSRRSSSSSDSTSASPVHAG) show a composition bias toward low complexity. The segment covering 475–484 (GTPGGGDGLP) has biased composition (gly residues).

The protein belongs to the DHHC palmitoyltransferase family. In terms of assembly, interacts with STING1; ZDHHC1 constitutively interacts with STING1 and in presence of DNA viruses activates it by promoting its cGAMP-induced oligomerization and the recruitment of downstream signaling components. Expressed at high levels in fetal lung and heart. Expressed at lower levels in fetal liver and brain. Also detected in adult islet cells of pancreas, Leydig cells of testis, retina and molecular layer of cerebellum.

It is found in the endosome membrane. Its subcellular location is the endoplasmic reticulum membrane. The protein resides in the golgi apparatus. It catalyses the reaction L-cysteinyl-[protein] + hexadecanoyl-CoA = S-hexadecanoyl-L-cysteinyl-[protein] + CoA. Its function is as follows. Palmitoyltransferase that catalyzes the addition of palmitate onto various protein substrates, such as NCDN and NLRP3. Has a palmitoyltransferase activity toward NCDN and regulates NCDN association with endosome membranes through this palmitoylation. Acts as an activator of the NLRP3 inflammasome by mediating palmitoylation of 'Cys-130' and 'Cys-958' of NLRP3, thereby promoting NLRP3 phosphorylation and activation by NEK7. Also has a palmitoyltransferase activity-independent function in DNA virus-triggered and CGAS-mediated innate immune response. Functions as an activator of STING1 by promoting its cGAMP-induced oligomerization and the recruitment of downstream signaling components. The sequence is that of Palmitoyltransferase ZDHHC1 from Mus musculus (Mouse).